Reading from the N-terminus, the 134-residue chain is Protein NrdI (134 aa).

This sequence belongs to the NrdI family.

In terms of biological role, probably involved in ribonucleotide reductase function. The chain is Protein NrdI from Chromohalobacter salexigens (strain ATCC BAA-138 / DSM 3043 / CIP 106854 / NCIMB 13768 / 1H11).